Consider the following 386-residue polypeptide: MNLHEYQAKQVLRSSNLNTPRGIAATSADAAADAARELGGEAWVVKAQIHAGGRGKAGGVKVVTSIDAVRSVAAALLGKPLVTVQNAPDGQPVHTVLVEETLPIARELYLSLLVDRASERVAVVASAAGGMDIEQVAHATPEKVLTEICDPLLGVQDFQCRALAFALGLGGDAYKDFCRLLPQLYRVFVANDLSLLEINPLVVTTDNRVLPLDCKMSVDDNALYRRKALADLRDDSQIDAKEAAANAANVNYVALAGNIGCMVNGAGLAMATMDLIQLEGGAPANFLDVGGGATPETVAQGFKIILLDPNVKAVLINIFGGIVRCDVIAEGIIQAVREVGVEVPVIVRLEGTNAELGRTLLAESGLAIVAAESLTQAAKFAVEKAA.

The 236-residue stretch at 9–244 folds into the ATP-grasp domain; that stretch reads KQVLRSSNLN…DSQIDAKEAA (236 aa). Residues lysine 46, 53–55, glutamate 99, leucine 102, and glutamate 107 contribute to the ATP site; that span reads GRG. Asparagine 199 and aspartate 213 together coordinate Mg(2+). Residues asparagine 264 and 321-323 contribute to the substrate site; that span reads GIV.

Belongs to the succinate/malate CoA ligase beta subunit family. Heterotetramer of two alpha and two beta subunits. Mg(2+) is required as a cofactor.

It catalyses the reaction succinate + ATP + CoA = succinyl-CoA + ADP + phosphate. The enzyme catalyses GTP + succinate + CoA = succinyl-CoA + GDP + phosphate. The protein operates within carbohydrate metabolism; tricarboxylic acid cycle; succinate from succinyl-CoA (ligase route): step 1/1. Functionally, succinyl-CoA synthetase functions in the citric acid cycle (TCA), coupling the hydrolysis of succinyl-CoA to the synthesis of either ATP or GTP and thus represents the only step of substrate-level phosphorylation in the TCA. The beta subunit provides nucleotide specificity of the enzyme and binds the substrate succinate, while the binding sites for coenzyme A and phosphate are found in the alpha subunit. The sequence is that of Succinate--CoA ligase [ADP-forming] subunit beta from Thiobacillus denitrificans (strain ATCC 25259 / T1).